Consider the following 142-residue polypeptide: Domesticated amidase effector 2 (142 aa).

The signal sequence occupies residues 1 to 35; that stretch reads MKLFLISAALVVLGLAAVADAIGCSDPSPFQGRWV. Catalysis depends on residues Cys43 and His94.

The protein belongs to the cell wall amidase Dae2/Tae2-like family. Post-translationally, may be post-translationally modified, since the saliva wild-type protein is slightly heavier than the recombinant one. Detected in salivary glands and in the gut (at protein level).

The protein localises to the secreted. Tick gut and saliva antibacterial peptide that directly antagonizes host skin commensals which enter the ticks during feeding. Acts as a cell wall hydrolase that cleaves the bond between gamma-D-glutamate-meso-diaminopimelate of a peptide stem and D-alanine of another peptide stem in peptidoglycans. In vitro, degrades peptidoglycans from both Gram-negative and Gram-positive bacteria. Is not able to traverse the protective outer membrane of Gram-negative bacteria. Is not able to kill Borrelia burgdorferi, one of the Lyme disease-causing bacteria. This chain is Domesticated amidase effector 2, found in Ixodes scapularis (Black-legged tick).